A 344-amino-acid polypeptide reads, in one-letter code: Probable magnesium transporter NIPA9 (344 aa).

The Cytoplasmic portion of the chain corresponds to 1–46 (MWESICLTLAATAGNNIGKVLQKKGTIILPPLSLKLKVLRAYAENK). Helical transmembrane passes span 47–67 (PWALGFLMDIVGALLMLRALS) and 68–88 (LAPVSVVQPVSGCGLAILSVF). Topologically, residues 89 to 98 (SHFYLKEVMN) are cytoplasmic. Residues 99–119 (VFDWIGITVAGIGTIGVGAGG) form a helical membrane-spanning segment. Residues 120 to 125 (EEQEAS) are Extracellular-facing. The chain crosses the membrane as a helical span at residues 126–146 (LISVFQLLWLALVVAILFVLL). The Cytoplasmic portion of the chain corresponds to 147–166 (NAWLHIFKRQRREQELGEYE). Residues 167-187 (VVEEIIYGLESGILFGMASVV) form a helical membrane-spanning segment. Residues 188–191 (SKMG) are Extracellular-facing. Residues 192 to 212 (FVFVEQGFSTMFIPMCISISI) form a helical membrane-spanning segment. Residues 213-231 (CCSGTGFFYQTRGLKHGRA) lie on the Cytoplasmic side of the membrane. Residues 232–252 (IVVSTCAAVASIVTGVVAGMF) traverse the membrane as a helical segment. Topologically, residues 253–265 (ALGEKLPTSPSGR) are extracellular. A helical transmembrane segment spans residues 266-286 (LLLLLGWLLIMLGVVLLVTSS). Residues 287–344 (RLIRHLPRSFRRSRQTSLERGFNIRRTTSHTPKDTNPSAVIQAATLHHLLSSPSKDKD) are Cytoplasmic-facing.

This sequence belongs to the NIPA (TC 2.A.7) family. In terms of assembly, homodimer.

It localises to the cell membrane. Its subcellular location is the early endosome. In terms of biological role, acts as a Mg(2+) transporter. Can also transport other divalent cations such as Fe(2+), Sr(2+), Ba(2+), Mn(2+) and Co(2+) but to a much less extent than Mg(2+). This Arabidopsis thaliana (Mouse-ear cress) protein is Probable magnesium transporter NIPA9.